Reading from the N-terminus, the 60-residue chain is Large ribosomal subunit protein bL32 (60 aa).

Residues 1–23 (MAKHPVPKKKTSKSKRDMRRSHH) show a composition bias toward basic residues. The segment at 1 to 26 (MAKHPVPKKKTSKSKRDMRRSHHALV) is disordered.

This sequence belongs to the bacterial ribosomal protein bL32 family.

This chain is Large ribosomal subunit protein bL32, found in Deinococcus geothermalis (strain DSM 11300 / CIP 105573 / AG-3a).